A 240-amino-acid chain; its full sequence is Eukaryotic translation initiation factor 3 subunit J (240 aa).

The interval M1 to A66 is disordered. Residues G27–K45 show a composition bias toward acidic residues.

Belongs to the eIF-3 subunit J family. In terms of assembly, component of the eukaryotic translation initiation factor 3 (eIF-3) complex. The eIF-3 complex interacts with pix.

Its subcellular location is the cytoplasm. Component of the eukaryotic translation initiation factor 3 (eIF-3) complex, which is involved in protein synthesis of a specialized repertoire of mRNAs and, together with other initiation factors, stimulates binding of mRNA and methionyl-tRNAi to the 40S ribosome. The eIF-3 complex specifically targets and initiates translation of a subset of mRNAs involved in cell proliferation. This is Eukaryotic translation initiation factor 3 subunit J from Drosophila persimilis (Fruit fly).